A 323-amino-acid chain; its full sequence is Trihelix transcription factor GT-3a (323 aa).

Over residues 1-20 (MDRRNPFQHHHHHHQLHHHL) the composition is skewed to basic residues. Residues 1–51 (MDRRNPFQHHHHHHQLHHHLIQQQQLPPPPLSTTATMDPGGGGGGGERIPQ) form a disordered region. The Myb-like domain occupies 52 to 108 (WSIEETKELLAIREELDQTFMETKRNKLLWEVVAAKMADKGFVRSAEQCKSKWKNLV). Disordered stretches follow at residues 147 to 176 (EATEPSTSSKRKHHQFSSDDEEEEVDEPNQ), 190 to 220 (KRETEVITTSTSTNPRKRAKKGKGVASGTKA), and 269 to 297 (ELEEERAATERRWMEREEERRLREEARAQ). A compositionally biased stretch (acidic residues) spans 164-176 (SDDEEEEVDEPNQ).

Homodimer. Heterodimer with GT-3B. As to expression, predominantly expressed in roots and flower buds.

Its subcellular location is the nucleus. Its function is as follows. Probable transcription factor that binds specifically to the core DNA sequence 5'-GTTAC-3'. This is Trihelix transcription factor GT-3a (GT-3A) from Arabidopsis thaliana (Mouse-ear cress).